The following is a 107-amino-acid chain: Essential MCU regulator, mitochondrial (107 aa).

Residues 1-52 constitute a mitochondrion transit peptide; sequence MASGAARWLVLAPVRSGALRSGPSLRKDGDVSAAWSGSGRSLVPSRSVIVTR. The tract at residues 1 to 52 is interaction with MAIP1; that stretch reads MASGAARWLVLAPVRSGALRSGPSLRKDGDVSAAWSGSGRSLVPSRSVIVTR. Residues 54–65 are Mitochondrial matrix-facing; the sequence is GAILPKPVKMSF. A helical membrane pass occupies residues 66–85; sequence GLLRVFSIVIPFLYVGTLIS. The GXXXX[G/A/S] signature appears at 81 to 85; it reads GTLIS. Topologically, residues 86–107 are mitochondrial intermembrane; sequence KNFAALLEEHDIFVPEDDDDDD.

Belongs to the SMDT1/EMRE family. Component of the uniplex complex, composed of MCU, EMRE/SMDT1, MICU1 and MICU2 (or MICU3) in a 4:4:1:1 stoichiometry. The number of EMRE/SMDT1 molecules is hovewer variable, ranging from 1 to 4 copies per uniplex complex, leading to uniplex complexes with distinct gatekeeping profiles. Interacts (via its C-terminal poly-Asp tail) with MCUR1; the interaction is direct. Unprocessed form interacts (via transit peptide) with MAIP1. Undergoes proteolytic degradation in neurons: degraded by AFG3L2 and SPG7 before SMDT1/EMRE assembly with the uniporter complex, limiting the availability of SMDT1/EMRE for MCU assembly and promoting efficient assembly of gatekeeper subunits with MCU.

The protein localises to the mitochondrion inner membrane. Functionally, essential regulatory subunit of the mitochondrial calcium uniporter complex (uniplex), a complex that mediates calcium uptake into mitochondria. Required to bridge the calcium-sensing proteins MICU1 with the calcium-conducting subunit MCU. Acts by mediating activation of MCU and retention of MICU1 to the MCU pore, in order to ensure tight regulation of the uniplex complex and appropriate responses to intracellular calcium signaling. In Homo sapiens (Human), this protein is Essential MCU regulator, mitochondrial.